The sequence spans 37 residues: Protease 2 large chain (37 aa).

A compositionally biased stretch (basic and acidic residues) spans 1–14 (NDGNGRDSDPHDPG). Positions 1–37 (NDGNGRDSDPHDPGDWTTAGQCGLWQPARNSQHWTLV) are disordered. The span at 28–37 (ARNSQHWTLV) shows a compositional bias: polar residues.

The protein belongs to the peptidase S8 family. In terms of assembly, heterodimer of a large and a small chain.

The protein localises to the secreted. The polypeptide is Protease 2 large chain (Achromobacter lyticus).